A 509-amino-acid chain; its full sequence is Cruciferin CRU1 (509 aa).

The signal sequence occupies residues 1-23 (MVKVPHLLVATFGVLLVLNGCLA). Cys37 and Cys70 are oxidised to a cystine. A Cupin type-1 1 domain is found at 42-271 (LDVLQPTETI…ALKIDVRLAQ (230 aa)). Phosphoserine is present on residues Ser53 and Ser97. Cys113 and Cys326 are disulfide-bonded. Residue Thr116 is modified to Phosphothreonine. 3 disordered regions span residues 119–175 (DSQP…GFRD), 230–249 (RLAGNNPQGGSQQQQQQQQN), and 301–321 (YESEQWRHPRGPPQSPQDNGL). Positions 124-172 (QGQQQGQPWQGQQGQQGQQGQQGQQGQQGQQGQQGQQGQQGQQGQQQQG) are enriched in low complexity. Residues 332-481 (ENIDDPARAD…AFQISLEEAR (150 aa)) enclose the Cupin type-1 2 domain. Residue Ser352 is modified to Phosphoserine. Thr445 and Thr487 each carry phosphothreonine.

It belongs to the 11S seed storage protein (globulins) family. Hexamer; each subunit is composed of an acidic and a basic chain derived from a single precursor and linked by a disulfide bond.

Functionally, this is a seed storage protein. This chain is Cruciferin CRU1 (CRU1), found in Brassica napus (Rape).